The chain runs to 268 residues: UPF0719 transmembrane protein aq_1349 (268 aa).

8 helical membrane-spanning segments follow: residues 5-24 (LIAL…LFFR), 37-59 (NLAL…YSVY), 69-91 (LYLI…IFLR), 104-126 (AGAG…ASFW), 130-152 (SFIL…LFIS), 173-195 (FSAS…GAIS), 210-232 (VLYF…FLLF), and 245-267 (NLSA…LAVM).

It belongs to the UPF0719 family.

The protein localises to the cell membrane. The chain is UPF0719 transmembrane protein aq_1349 from Aquifex aeolicus (strain VF5).